The following is a 785-amino-acid chain: 1-phosphatidylinositol 4,5-bisphosphate phosphodiesterase delta-3 (785 aa).

The tract at residues 1–43 is disordered; that stretch reads MLCGGWKRSRRSPEESRVSAQVAAPLAFPPSPASSDSSTKRPG. Residues 65–168 enclose the PH domain; it reads SRLLKIRSRT…WVRGLAKLRA (104 aa). A substrate binding region spans residues 69–97; sequence KIRSRTWHKERLYRLQEDGLSVWFQRRIP. Serine 101 bears the Phosphoserine mark. 3 EF-hand domains span residues 178–213, 214–249, and 246–281; these read RLDH…VNVD, MNDM…LLKR, and LLKR…QGED. Ca(2+)-binding residues include aspartate 191, aspartate 193, aspartate 195, lysine 197, glutamate 202, aspartate 227, serine 229, asparagine 231, arginine 233, and glutamate 238. The region spanning 333-478 is the PI-PLC X-box domain; the sequence is QDMGQPLAHY…LKGRILVKGK (146 aa). Residue histidine 348 is part of the active site. 3 residues coordinate Ca(2+): asparagine 349, glutamate 378, and aspartate 380. Histidine 393 is a catalytic residue. Glutamate 427 is a Ca(2+) binding site. Residues lysine 476 and lysine 478 each contribute to the substrate site. The span at 484–493 shows a compositional bias: basic and acidic residues; that stretch reads RSEDGRILSD. A disordered region spans residues 484–517; the sequence is RSEDGRILSDREEEEEEEEEAEEALEAAEQRSRA. Phosphoserine is present on serine 492. Residues 494–509 show a composition bias toward acidic residues; sequence REEEEEEEEEAEEALE. A PI-PLC Y-box domain is found at 524–640; that stretch reads LSALAVYCCA…GYVLKPAYLR (117 aa). Residue serine 553 participates in substrate binding. Phosphoserine is present on serine 569. Arginine 580 provides a ligand contact to substrate. The 130-residue stretch at 636–765 folds into the C2 domain; it reads PAYLRQLNTT…QGYRHIHLLS (130 aa). Positions 679, 681, 705, 734, 735, and 736 each coordinate Ca(2+).

It depends on Ca(2+) as a cofactor. Expressed in cerebellum and cerebral cortex.

The protein localises to the membrane. It localises to the cytoplasm. It is found in the cleavage furrow. The catalysed reaction is a 1,2-diacyl-sn-glycero-3-phospho-(1D-myo-inositol-4,5-bisphosphate) + H2O = 1D-myo-inositol 1,4,5-trisphosphate + a 1,2-diacyl-sn-glycerol + H(+). Its activity is regulated as follows. Strongly activated by phosphatidic acid. Inhibited by phosphatidylethanolamine (PtdEtn), phosphatidylcholine (PtdCho), sphingomyelin and phosphatidylserine (PtdSer). Its function is as follows. Hydrolyzes the phosphatidylinositol 4,5-bisphosphate (PIP2) to generate 2 second messenger molecules diacylglycerol (DAG) and inositol 1,4,5-trisphosphate (IP3). DAG mediates the activation of protein kinase C (PKC), while IP3 releases Ca(2+) from intracellular stores. Essential for trophoblast and placental development. May participate in cytokinesis by hydrolyzing PIP2 at the cleavage furrow. Regulates neurite outgrowth through the inhibition of RhoA/Rho kinase signaling. The polypeptide is 1-phosphatidylinositol 4,5-bisphosphate phosphodiesterase delta-3 (Mus musculus (Mouse)).